The primary structure comprises 363 residues: Double-strand-specific pac1 ribonuclease (363 aa).

Disordered stretches follow at residues 1–35 (MGRFKRHHEGDSDSSSSASDSLSRGRRSLGHKRSS) and 92–138 (SRHD…PPLR). The span at 13-22 (DSSSSASDSL) shows a compositional bias: low complexity. Basic residues predominate over residues 24–35 (RGRRSLGHKRSS). Serine 122 is modified (phosphoserine). Residues 139–262 (SEKLKEQVFM…YLGALILDGQ (124 aa)) enclose the RNase III domain. In terms of domain architecture, DRBM spans 285–356 (RPIDKLAKSK…AMQALEVLAK (72 aa)).

Mg(2+) is required as a cofactor.

It carries out the reaction Endonucleolytic cleavage to 5'-phosphomonoester.. Its function is as follows. Digests double-stranded RNA. Converts long double-stranded RNAs into short oligonucleotides, leaving 5'-phosphates on their cleavage products. Probably inhibits mating and meiosis by degrading a specific mRNA required for sexual development. The polypeptide is Double-strand-specific pac1 ribonuclease (pac1) (Schizosaccharomyces pombe (strain 972 / ATCC 24843) (Fission yeast)).